The primary structure comprises 422 residues: UDP-N-acetylglucosamine 1-carboxyvinyltransferase (422 aa).

Lys22–Asn23 contacts phosphoenolpyruvate. Arg92 is a UDP-N-acetyl-alpha-D-glucosamine binding site. The active-site Proton donor is Cys116. Residue Cys116 is modified to 2-(S-cysteinyl)pyruvic acid O-phosphothioketal. Residues Arg121–Gln125, Asp307, and Ile329 contribute to the UDP-N-acetyl-alpha-D-glucosamine site.

This sequence belongs to the EPSP synthase family. MurA subfamily.

Its subcellular location is the cytoplasm. It carries out the reaction phosphoenolpyruvate + UDP-N-acetyl-alpha-D-glucosamine = UDP-N-acetyl-3-O-(1-carboxyvinyl)-alpha-D-glucosamine + phosphate. Its pathway is cell wall biogenesis; peptidoglycan biosynthesis. In terms of biological role, cell wall formation. Adds enolpyruvyl to UDP-N-acetylglucosamine. This chain is UDP-N-acetylglucosamine 1-carboxyvinyltransferase, found in Psychrobacter arcticus (strain DSM 17307 / VKM B-2377 / 273-4).